The following is an 85-amino-acid chain: Small ribosomal subunit protein uS17 (85 aa).

This sequence belongs to the universal ribosomal protein uS17 family. Part of the 30S ribosomal subunit.

In terms of biological role, one of the primary rRNA binding proteins, it binds specifically to the 5'-end of 16S ribosomal RNA. The protein is Small ribosomal subunit protein uS17 of Blochmanniella floridana.